The sequence spans 370 residues: S-adenosylmethionine decarboxylase proenzyme (370 aa).

Phe-28 serves as a coordination point for substrate. Residues Glu-29 and Glu-32 contribute to the active site. Glu-85 provides a ligand contact to substrate. Ser-86 acts as the Schiff-base intermediate with substrate; via pyruvic acid in catalysis. Position 86 is a pyruvic acid (Ser); by autocatalysis (Ser-86). Residue Cys-100 is the Proton donor; for catalytic activity of the active site. Active-site proton acceptor; for processing activity residues include Ser-250 and His-263. Residue Glu-267 coordinates substrate.

Belongs to the eukaryotic AdoMetDC family. Forms a heterodimer with catalytically inactive AdoMetDC prozyme; heterodimerization is required to activate AdoMetDC. Pyruvate serves as cofactor. Is synthesized initially as an inactive proenzyme. Formation of the active enzyme involves a self-maturation process in which the active site pyruvoyl group is generated from an internal serine residue via an autocatalytic post-translational modification. Two non-identical subunits are generated from the proenzyme in this reaction, and the pyruvate is formed at the N-terminus of the alpha chain, which is derived from the carboxyl end of the proenzyme. The post-translation cleavage follows an unusual pathway, termed non-hydrolytic serinolysis, in which the side chain hydroxyl group of the serine supplies its oxygen atom to form the C-terminus of the beta chain, while the remainder of the serine residue undergoes an oxidative deamination to the alpha chain.

It catalyses the reaction S-adenosyl-L-methionine + H(+) = S-adenosyl 3-(methylsulfanyl)propylamine + CO2. The protein operates within amine and polyamine biosynthesis; S-adenosylmethioninamine biosynthesis; S-adenosylmethioninamine from S-adenosyl-L-methionine: step 1/1. Its activity is regulated as follows. Allosterically activated by AdoMetDC prozyme. Activated by putrescine. Inhibited by spermine and methylglyoxal-bis(guanylhydrazone) (MGBG) and slightly by spermidine. Inhibited by 5'-([(Z)-4-amino-2-butenyl]methylamino)-5'-deoxyadenosine (MDL 73811). Its function is as follows. Probably in association with catalytically inactive AdoMetDC prozyme, catalyzes the decarboxylation of S-adenosyl-L-methionine which is essential for the biosynthesis of the polyamine spermidine. Required for growth and survival during the bloodstream life cycle stage. This is S-adenosylmethionine decarboxylase proenzyme from Trypanosoma cruzi.